Here is an 88-residue protein sequence, read N- to C-terminus: Apolipoprotein C-I (88 aa).

The signal sequence occupies residues 1-26; it reads MRLLLSLPVLLVALSVVLERPAPAQA.

It belongs to the apolipoprotein C1 family.

It is found in the secreted. Inhibitor of lipoprotein binding to the low density lipoprotein (LDL) receptor, LDL receptor-related protein, and very low density lipoprotein (VLDL) receptor. Associates with high density lipoproteins (HDL) and the triacylglycerol-rich lipoproteins in the plasma and makes up about 10% of the protein of the VLDL and 2% of that of HDL. Appears to interfere directly with fatty acid uptake and is also the major plasma inhibitor of cholesteryl ester transfer protein (CETP). Binds free fatty acids and reduces their intracellular esterification. Modulates the interaction of APOE with beta-migrating VLDL and inhibits binding of beta-VLDL to the LDL receptor-related protein. The protein is Apolipoprotein C-I (APOC1) of Tupaia glis (Common tree shrew).